We begin with the raw amino-acid sequence, 277 residues long: Alpha carbonic anhydrase 5 (277 aa).

The first 22 residues, M1–S22, serve as a signal peptide directing secretion. In terms of domain architecture, Alpha-carbonic anhydrase spans T33 to I269. C58 and C219 are disulfide-bonded. A glycan (N-linked (GlcNAc...) asparagine) is linked at N91. The active-site Proton acceptor is the H99. A glycan (N-linked (GlcNAc...) asparagine) is linked at N117. H127, H129, and H146 together coordinate Zn(2+). Position 215-216 (T215–T216) interacts with substrate.

This sequence belongs to the alpha-class carbonic anhydrase family. Zn(2+) serves as cofactor. Post-translationally, N-glycosylated.

The protein localises to the plastid. Its subcellular location is the chloroplast stroma. It catalyses the reaction hydrogencarbonate + H(+) = CO2 + H2O. Its function is as follows. Reversible hydration of carbon dioxide. The chain is Alpha carbonic anhydrase 5 (ACA5) from Arabidopsis thaliana (Mouse-ear cress).